The sequence spans 224 residues: MTDSLIAIVPAAGVGQRAGRPDLPKQYRLLAGQPMLRWAVAALLADARIGQVRVAVSPGDERAGAALAGLPRTVCRPCGGPTRAATVAAALADSNAADSDWILVHDAARPGLPPDALARLIDACLADAVGGLLALPVADTVKAGGPRVRATLDRDGLWLAQTPQMFRAGVLRAALAAAQAGGGTVTDEASAIEAAGHAPLLVPGAMRNFKVTWPDDFELMEKWL.

The protein belongs to the IspD/TarI cytidylyltransferase family. IspD subfamily.

It catalyses the reaction 2-C-methyl-D-erythritol 4-phosphate + CTP + H(+) = 4-CDP-2-C-methyl-D-erythritol + diphosphate. Its pathway is isoprenoid biosynthesis; isopentenyl diphosphate biosynthesis via DXP pathway; isopentenyl diphosphate from 1-deoxy-D-xylulose 5-phosphate: step 2/6. Its function is as follows. Catalyzes the formation of 4-diphosphocytidyl-2-C-methyl-D-erythritol from CTP and 2-C-methyl-D-erythritol 4-phosphate (MEP). The protein is 2-C-methyl-D-erythritol 4-phosphate cytidylyltransferase of Bordetella petrii (strain ATCC BAA-461 / DSM 12804 / CCUG 43448).